Here is a 330-residue protein sequence, read N- to C-terminus: tRNA U34 carboxymethyltransferase (330 aa).

Residues lysine 91, tryptophan 105, lysine 110, glycine 130, 152–154, 181–182, methionine 196, tyrosine 200, and arginine 315 contribute to the carboxy-S-adenosyl-L-methionine site; these read DPS and IE.

The protein belongs to the class I-like SAM-binding methyltransferase superfamily. CmoB family. As to quaternary structure, homotetramer.

It catalyses the reaction carboxy-S-adenosyl-L-methionine + 5-hydroxyuridine(34) in tRNA = 5-carboxymethoxyuridine(34) in tRNA + S-adenosyl-L-homocysteine + H(+). Functionally, catalyzes carboxymethyl transfer from carboxy-S-adenosyl-L-methionine (Cx-SAM) to 5-hydroxyuridine (ho5U) to form 5-carboxymethoxyuridine (cmo5U) at position 34 in tRNAs. The polypeptide is tRNA U34 carboxymethyltransferase (Shewanella sp. (strain ANA-3)).